The primary structure comprises 496 residues: UDP-N-acetylmuramoyl-L-alanyl-D-glutamate--2,6-diaminopimelate ligase (496 aa).

UDP-N-acetyl-alpha-D-muramoyl-L-alanyl-D-glutamate is bound by residues Leu24 and Ser26. 109–115 (GTNGKTS) lines the ATP pocket. UDP-N-acetyl-alpha-D-muramoyl-L-alanyl-D-glutamate is bound by residues 151 to 152 (TT), Ser178, Gln184, and Arg186. Lys218 bears the N6-carboxylysine mark. Residues Arg387, 411-414 (DNPR), Gly462, and Glu466 contribute to the meso-2,6-diaminopimelate site. The short motif at 411–414 (DNPR) is the Meso-diaminopimelate recognition motif element.

It belongs to the MurCDEF family. MurE subfamily. Mg(2+) serves as cofactor. Post-translationally, carboxylation is probably crucial for Mg(2+) binding and, consequently, for the gamma-phosphate positioning of ATP.

The protein localises to the cytoplasm. It carries out the reaction UDP-N-acetyl-alpha-D-muramoyl-L-alanyl-D-glutamate + meso-2,6-diaminopimelate + ATP = UDP-N-acetyl-alpha-D-muramoyl-L-alanyl-gamma-D-glutamyl-meso-2,6-diaminopimelate + ADP + phosphate + H(+). It functions in the pathway cell wall biogenesis; peptidoglycan biosynthesis. Its function is as follows. Catalyzes the addition of meso-diaminopimelic acid to the nucleotide precursor UDP-N-acetylmuramoyl-L-alanyl-D-glutamate (UMAG) in the biosynthesis of bacterial cell-wall peptidoglycan. The protein is UDP-N-acetylmuramoyl-L-alanyl-D-glutamate--2,6-diaminopimelate ligase of Pseudomonas putida (strain ATCC 47054 / DSM 6125 / CFBP 8728 / NCIMB 11950 / KT2440).